Reading from the N-terminus, the 125-residue chain is Small ribosomal subunit protein bS16 (125 aa).

A disordered region spans residues 87–125; that stretch reads EGKKKQALARQSASKKAVKEKTEESKGSEVDSETSTSAD. Positions 103-115 are enriched in basic and acidic residues; it reads AVKEKTEESKGSE.

This sequence belongs to the bacterial ribosomal protein bS16 family.

In Prochlorococcus marinus (strain MIT 9211), this protein is Small ribosomal subunit protein bS16.